The sequence spans 1160 residues: Nck-associated protein 1 homolog (1160 aa).

Belongs to the HEM-1/HEM-2 family. In terms of assembly, part of a Scar/WAVE complex containing brk1, scrA, abiA, pirA and napA.

Involved in regulation of actin and microtubule organization. Involved in cell adhesion. This Dictyostelium discoideum (Social amoeba) protein is Nck-associated protein 1 homolog (napA).